Consider the following 455-residue polypeptide: GTPase Der (455 aa).

EngA-type G domains follow at residues 4-174 (PIVA…PAGQ) and 183-358 (LKIA…SERN). GTP is bound by residues 10-17 (GRPNVGKS), 57-61 (DTAGL), 126-129 (NKAD), 189-196 (GRPNVGKS), 236-240 (DTAGI), and 301-304 (NKWD). A KH-like domain is found at 359–444 (KRVSTSDINN…PIILVFKGRE (86 aa)).

Belongs to the TRAFAC class TrmE-Era-EngA-EngB-Septin-like GTPase superfamily. EngA (Der) GTPase family. As to quaternary structure, associates with the 50S ribosomal subunit.

GTPase that plays an essential role in the late steps of ribosome biogenesis. The chain is GTPase Der from Herpetosiphon aurantiacus (strain ATCC 23779 / DSM 785 / 114-95).